The sequence spans 82 residues: Protein C2 (82 aa).

This Sterkiella nova (Ciliate) protein is Protein C2 (C2).